We begin with the raw amino-acid sequence, 155 residues long: Interleukin-2 (155 aa).

An N-terminal signal peptide occupies residues 1-20 (MYKMQLLSCIALTLVLVANS). A glycan (O-linked (GalNAc...) threonine) is linked at Thr24. Cysteines 79 and 127 form a disulfide. The N-linked (GlcNAc...) asparagine glycan is linked to Asn112.

Belongs to the IL-2 family.

Its subcellular location is the secreted. Cytokine produced by activated CD4-positive helper T-cells and to a lesser extend activated CD8-positive T-cells and natural killer (NK) cells that plays pivotal roles in the immune response and tolerance. Binds to a receptor complex composed of either the high-affinity trimeric IL-2R (IL2RA/CD25, IL2RB/CD122 and IL2RG/CD132) or the low-affinity dimeric IL-2R (IL2RB and IL2RG). Interaction with the receptor leads to oligomerization and conformation changes in the IL-2R subunits resulting in downstream signaling starting with phosphorylation of JAK1 and JAK3. In turn, JAK1 and JAK3 phosphorylate the receptor to form a docking site leading to the phosphorylation of several substrates including STAT5. This process leads to activation of several pathways including STAT, phosphoinositide-3-kinase/PI3K and mitogen-activated protein kinase/MAPK pathways. Functions as a T-cell growth factor and can increase NK-cell cytolytic activity as well. Promotes strong proliferation of activated B-cells and subsequently immunoglobulin production. Plays a pivotal role in regulating the adaptive immune system by controlling the survival and proliferation of regulatory T-cells, which are required for the maintenance of immune tolerance. Moreover, participates in the differentiation and homeostasis of effector T-cell subsets, including Th1, Th2, Th17 as well as memory CD8-positive T-cells. This chain is Interleukin-2 (IL2), found in Canis lupus familiaris (Dog).